We begin with the raw amino-acid sequence, 394 residues long: Seipin (394 aa).

Over 1–27 (MVNDPPVPALLWAQEMGHVMAGRARKL) the chain is Cytoplasmic. Residues 28 to 48 (LLQFGVFFCTILLLLWVSVFL) form a helical membrane-spanning segment. The Lumenal portion of the chain corresponds to 49–242 (YGSFYYSYMP…TCAFVGVASN (194 aa)). Residues N88 and N242 are each glycosylated (N-linked (GlcNAc...) asparagine). A helical transmembrane segment spans residues 243–263 (FTFLSVIVLFSYMQWVWGGIW). Over 264–394 (PRQRLSLQVN…VRQRPICSSS (131 aa)) the chain is Cytoplasmic. Residues 281–394 (RKDIQRKVSA…VRQRPICSSS (114 aa)) form a disordered region. A Phosphoserine modification is found at S289. Residues 292–303 (QPGPQGQEESPQ) are compositionally biased toward low complexity. 2 positions are modified to phosphoserine: S346 and S351.

The protein belongs to the seipin family. In terms of assembly, undecamer (an oligomer having eleven subunits). Oligomerization is important for its function in lipid droplet formation. Interacts with LDAF1 to form an oligomeric complex. Interacts with RAB18. Interacts with ZFYVE1 in a RAB18-dependent manner.

The protein localises to the endoplasmic reticulum membrane. It is found in the lipid droplet. Functionally, plays a crucial role in the formation of lipid droplets (LDs) which are storage organelles at the center of lipid and energy homeostasis. In association with LDAF1, defines the sites of LD formation in the ER. Also required for growth and maturation of small nascent LDs into larger mature LDs. Mediates the formation and/or stabilization of endoplasmic reticulum-lipid droplets (ER-LD) contacts, facilitating protein and lipid delivery from the ER into growing LDs. Regulates the maturation of ZFYVE1-positive nascent LDs and the function of the RAB18-ZFYVE1 complex in mediating the formation of ER-LD contacts. Binds anionic phospholipids including phosphatidic acid. Plays an important role in the differentiation and development of adipocytes. The sequence is that of Seipin from Bos taurus (Bovine).